Here is a 346-residue protein sequence, read N- to C-terminus: Flap endonuclease 1 (346 aa).

The tract at residues 1–102 (MGVTELGKLI…AEIEERRKAK (102 aa)) is N-domain. Aspartate 31, aspartate 84, glutamate 156, glutamate 158, aspartate 177, aspartate 179, and aspartate 239 together coordinate Mg(2+). Positions 120–261 (EVAKYAKRAI…RALKLIWEFG (142 aa)) are I-domain.

It belongs to the XPG/RAD2 endonuclease family. FEN1 subfamily. Interacts with PCNA. PCNA stimulates the nuclease activity without altering cleavage specificity. The cofactor is Mg(2+).

Structure-specific nuclease with 5'-flap endonuclease and 5'-3' exonuclease activities involved in DNA replication and repair. During DNA replication, cleaves the 5'-overhanging flap structure that is generated by displacement synthesis when DNA polymerase encounters the 5'-end of a downstream Okazaki fragment. Binds the unpaired 3'-DNA end and kinks the DNA to facilitate 5' cleavage specificity. Cleaves one nucleotide into the double-stranded DNA from the junction in flap DNA, leaving a nick for ligation. Also involved in the base excision repair (BER) pathway. Acts as a genome stabilization factor that prevents flaps from equilibrating into structures that lead to duplications and deletions. Also possesses 5'-3' exonuclease activity on nicked or gapped double-stranded DNA. This is Flap endonuclease 1 from Pyrobaculum arsenaticum (strain DSM 13514 / JCM 11321 / PZ6).